The following is a 97-amino-acid chain: Aspartyl/glutamyl-tRNA(Asn/Gln) amidotransferase subunit C (97 aa).

The span at 74 to 84 shows a compositional bias: low complexity; sequence TPEEATAAAPA. The segment at 74–97 is disordered; that stretch reads TPEEATAAAPAREGTAFKVPRIIE.

Belongs to the GatC family. As to quaternary structure, heterotrimer of A, B and C subunits.

It catalyses the reaction L-glutamyl-tRNA(Gln) + L-glutamine + ATP + H2O = L-glutaminyl-tRNA(Gln) + L-glutamate + ADP + phosphate + H(+). It carries out the reaction L-aspartyl-tRNA(Asn) + L-glutamine + ATP + H2O = L-asparaginyl-tRNA(Asn) + L-glutamate + ADP + phosphate + 2 H(+). Functionally, allows the formation of correctly charged Asn-tRNA(Asn) or Gln-tRNA(Gln) through the transamidation of misacylated Asp-tRNA(Asn) or Glu-tRNA(Gln) in organisms which lack either or both of asparaginyl-tRNA or glutaminyl-tRNA synthetases. The reaction takes place in the presence of glutamine and ATP through an activated phospho-Asp-tRNA(Asn) or phospho-Glu-tRNA(Gln). The sequence is that of Aspartyl/glutamyl-tRNA(Asn/Gln) amidotransferase subunit C from Anaeromyxobacter dehalogenans (strain 2CP-1 / ATCC BAA-258).